The following is a 70-amino-acid chain: MSTKMTGSVKWFNETKGFGFLTQDNGGNDVFVHFNSIQSEGFKTLAEGQRVSFIVEQGKKGPQASNVVAL.

In terms of domain architecture, CSD spans 7–67; sequence GSVKWFNETK…GKKGPQASNV (61 aa).

It localises to the cytoplasm. The protein is Cold shock protein CspV (cspV) of Vibrio cholerae serotype O1 (strain ATCC 39315 / El Tor Inaba N16961).